We begin with the raw amino-acid sequence, 244 residues long: Protein YIPF4 (244 aa).

Topologically, residues 1-113 (MQPPGPPPAY…FNRQVVRDNP (113 aa)) are cytoplasmic. A helical membrane pass occupies residues 114–134 (DFWGPLAVVLFFSMISLYGQF). Residues 135-138 (RVVS) are Extracellular-facing. A helical membrane pass occupies residues 139 to 159 (WIITIWIFGSLTIFLLARVLG). Over 160-166 (GEVAYGQ) the chain is Cytoplasmic. Residues 167 to 187 (VLGVIGYSLLPLIVIAPVLLV) form a helical membrane-spanning segment. Topologically, residues 188 to 195 (VGSFEVVS) are extracellular. A helical membrane pass occupies residues 196 to 216 (TLIKLFGVFWAAYSAASLLVG). Residues 217–223 (EEFKTKK) lie on the Cytoplasmic side of the membrane. Residues 224–244 (PLLIYPIFLLYIYFLSLYTGV) traverse the membrane as a helical segment.

It belongs to the YIP1 family. Interacts with YIPF3 and YIPF5. As to quaternary structure, (Microbial infection) Interacts with human papillomavirus (HPV) E5 proteins. As to expression, expressed in keratinocytes (at protein level).

The protein resides in the golgi apparatus. Its subcellular location is the cis-Golgi network membrane. Involved in the maintenance of the Golgi structure. This chain is Protein YIPF4 (YIPF4), found in Homo sapiens (Human).